The following is a 179-amino-acid chain: Large ribosomal subunit protein uL5 (179 aa).

Belongs to the universal ribosomal protein uL5 family. As to quaternary structure, part of the 50S ribosomal subunit; part of the 5S rRNA/L5/L18/L25 subcomplex. Contacts the 5S rRNA and the P site tRNA. Forms a bridge to the 30S subunit in the 70S ribosome.

This is one of the proteins that bind and probably mediate the attachment of the 5S RNA into the large ribosomal subunit, where it forms part of the central protuberance. In the 70S ribosome it contacts protein S13 of the 30S subunit (bridge B1b), connecting the 2 subunits; this bridge is implicated in subunit movement. Contacts the P site tRNA; the 5S rRNA and some of its associated proteins might help stabilize positioning of ribosome-bound tRNAs. The chain is Large ribosomal subunit protein uL5 from Pseudomonas paraeruginosa (strain DSM 24068 / PA7) (Pseudomonas aeruginosa (strain PA7)).